Reading from the N-terminus, the 512-residue chain is Nephrocan (512 aa).

The N-terminal stretch at methionine 1–alanine 19 is a signal peptide. Residues asparagine 20–glycine 44 enclose the LRRNT domain. 17 LRR repeats span residues isoleucine 45–glycine 69, leucine 71–threonine 93, leucine 94–asparagine 117, glutamate 119–glycine 138, leucine 139–proline 162, alanine 164–leucine 185, proline 186–serine 208, glutamine 210–serine 232, leucine 234–histidine 253, leucine 254–leucine 276, threonine 277–arginine 299, glutamine 301–aspartate 320, leucine 321–arginine 344, serine 346–arginine 371, aspartate 373–aspartate 389, leucine 390–glycine 413, and proline 415–alanine 442. N-linked (GlcNAc...) asparagine glycosylation occurs at asparagine 66. The segment covering glutamate 474–lysine 484 has biased composition (basic and acidic residues). Positions glutamate 474 to aspartate 512 are disordered. The span at aspartate 503–aspartate 512 shows a compositional bias: acidic residues.

This sequence belongs to the small leucine-rich proteoglycan (SLRP) family. Post-translationally, N-glycosylated. As to expression, expressed at highest levels in the kidney, where it is primarily detected in the epithelial cells of distal tubules and collecting ducts, and more weakly in proximal epithelial cells. Expressed at lower levels in heart and lung (at protein level). Detected in skeletal muscle.

The protein localises to the secreted. May inhibit TGF-beta signaling. The chain is Nephrocan from Mus musculus (Mouse).